A 757-amino-acid chain; its full sequence is Xaa-Pro dipeptidyl-peptidase (757 aa).

Catalysis depends on charge relay system residues Ser-348, Asp-468, and His-498.

It belongs to the peptidase S15 family. As to quaternary structure, homodimer.

It localises to the cytoplasm. The enzyme catalyses Hydrolyzes Xaa-Pro-|- bonds to release unblocked, N-terminal dipeptides from substrates including Ala-Pro-|-p-nitroanilide and (sequentially) Tyr-Pro-|-Phe-Pro-|-Gly-Pro-|-Ile.. Its function is as follows. Removes N-terminal dipeptides sequentially from polypeptides having unsubstituted N-termini provided that the penultimate residue is proline. This chain is Xaa-Pro dipeptidyl-peptidase, found in Streptococcus pneumoniae (strain P1031).